The primary structure comprises 776 residues: Protein translocase subunit SecA 2 (776 aa).

Residues Gln-80, 98-102, and Asp-486 each bind ATP; that span reads GEGKT.

This sequence belongs to the SecA family. Monomer and homodimer. Part of the essential Sec protein translocation apparatus which comprises SecA, SecYEG and auxiliary proteins SecDF. Other proteins may also be involved.

It is found in the cell membrane. It localises to the cytoplasm. It catalyses the reaction ATP + H2O + cellular proteinSide 1 = ADP + phosphate + cellular proteinSide 2.. Its function is as follows. Part of the Sec protein translocase complex. Interacts with the SecYEG preprotein conducting channel. Has a central role in coupling the hydrolysis of ATP to the transfer of proteins into and across the cell membrane, serving as an ATP-driven molecular motor driving the stepwise translocation of polypeptide chains across the membrane. The protein is Protein translocase subunit SecA 2 of Listeria monocytogenes serovar 1/2a (strain ATCC BAA-679 / EGD-e).